A 367-amino-acid polypeptide reads, in one-letter code: tRNA (cytosine(34)-C(5))-methyltransferase, mitochondrial (367 aa).

S-adenosyl-L-methionine contacts are provided by residues 170 to 176, Glu-193, Asp-224, and Asp-242; that span reads CAAPGGK. The active-site Nucleophile is Cys-296.

This sequence belongs to the class I-like SAM-binding methyltransferase superfamily. RsmB/NOP family.

The protein localises to the mitochondrion matrix. The catalysed reaction is cytidine(34) in mitochondrial tRNA + S-adenosyl-L-methionine = 5-methylcytidine(34) in mitochondrial tRNA + S-adenosyl-L-homocysteine + H(+). Mitochondrial tRNA methyltransferase that mediates methylation of cytosine to 5-methylcytosine (m5C) at position 34 of mt-tRNA(Met). mt-tRNA(Met) methylation at cytosine(34) takes place at the wobble position of the anticodon and initiates the formation of 5-formylcytosine (f(5)c) at this position. mt-tRNA(Met) containing the f(5)c modification at the wobble position enables recognition of the AUA codon in addition to the AUG codon, expanding codon recognition in mitochondrial translation. This is tRNA (cytosine(34)-C(5))-methyltransferase, mitochondrial from Danio rerio (Zebrafish).